The following is a 149-amino-acid chain: L-alanine exporter AlaE (149 aa).

4 consecutive transmembrane segments (helical) span residues 16-36 (FAMV…LSGM), 46-66 (LVAI…RDLF), 85-105 (ILAY…VVGA), and 112-132 (AAVS…GYFL).

It belongs to the AlaE exporter family.

It localises to the cell inner membrane. In terms of biological role, exports L-alanine. This Shigella flexneri protein is L-alanine exporter AlaE.